The primary structure comprises 476 residues: 4-(hydroxymethyl)benzenesulfonate dehydrogenase TsaD1 (476 aa).

NAD(+) is bound by residues 154-155 (WN), 178-181 (KAAE), and 230-231 (GS). Residue glutamate 252 is the Proton acceptor of the active site. Residue leucine 253 participates in NAD(+) binding. Cysteine 286 (nucleophile) is an active-site residue. NAD(+) is bound at residue glutamate 380.

The protein belongs to the aldehyde dehydrogenase family. In terms of assembly, homodimer.

It carries out the reaction 4-(hydroxymethyl)benzenesulfonate + NAD(+) = 4-formylbenzenesulfonate + NADH + H(+). In terms of biological role, involved in the toluene-4-sulfonate degradation pathway. Does not discriminate between the sulfonate and the carboxyl substituents and can also be involved in the p-toluenecarboxylate degradation pathway. This Comamonas testosteroni (Pseudomonas testosteroni) protein is 4-(hydroxymethyl)benzenesulfonate dehydrogenase TsaD1 (tsaD1).